The sequence spans 488 residues: 3-octaprenyl-4-hydroxybenzoate carboxy-lyase (488 aa).

Asparagine 172 provides a ligand contact to Mn(2+). Prenylated FMN contacts are provided by residues 175-177 (IYR), 189-191 (RWL), and 194-195 (RG). Glutamate 238 lines the Mn(2+) pocket. Aspartate 287 functions as the Proton donor in the catalytic mechanism.

This sequence belongs to the UbiD family. In terms of assembly, homohexamer. Requires prenylated FMN as cofactor. The cofactor is Mn(2+).

It is found in the cell membrane. The catalysed reaction is a 4-hydroxy-3-(all-trans-polyprenyl)benzoate + H(+) = a 2-(all-trans-polyprenyl)phenol + CO2. Its pathway is cofactor biosynthesis; ubiquinone biosynthesis. Its function is as follows. Catalyzes the decarboxylation of 3-octaprenyl-4-hydroxy benzoate to 2-octaprenylphenol, an intermediate step in ubiquinone biosynthesis. The sequence is that of 3-octaprenyl-4-hydroxybenzoate carboxy-lyase from Pseudomonas fluorescens (strain Pf0-1).